Consider the following 581-residue polypeptide: Activating signal cointegrator 1 (581 aa).

Alanine 2 carries the post-translational modification N-acetylalanine. The disordered stretch occupies residues 100-121 (DQLKRSRRKGRNKQEVPAFPEP). The C4-type zinc-finger motif lies at 167 to 219 (GRHPCDCLGQKHKLINNCLVCGRIVCEQEGSGPCLFCGSLVCTNEEQDILQRD). The interval 200-300 (CLFCGSLVCT…ASDSNQWLSK (101 aa)) is mediates interaction with DDRGK1. The residue at position 276 (serine 276) is a Phosphoserine. Tyrosine 289 carries the post-translational modification Phosphotyrosine. Positions 300–400 (KVEREMLQKR…WVDNTGSTPQ (101 aa)) are mediates interaction with UFL1. Glycyl lysine isopeptide (Lys-Gly) (interchain with G-Cter in UFM1) cross-links involve residues lysine 324 and lysine 334. The span at 390-406 (QWVDNTGSTPQKKTSLS) shows a compositional bias: polar residues. Positions 390-410 (QWVDNTGSTPQKKTSLSAGPR) are disordered. In terms of domain architecture, ASCH spans 437–531 (LSMHQPWASL…FQEQFPDISQ (95 aa)).

Interacts with the thyroid hormone receptor/TR (via the ligand-binding domain); this interaction requires the presence of thyroid hormone. Interacts with the androgen receptor/AR; in an androgen, testosterone and dihydrotestosterone-dependent manner. Interacts with ESR1 (estrogen ligand-bound); competes with UFSP2. Interacts with UFSP2; competes with ligand-bound ESR1. Interacts with DDRGK1 and UFL1; the interaction with DDRGK1 is direct. Interacts with NCOA1. Interacts with EP300. Part of the ASC-1 complex, that contains TRIP4, ASCC1, ASCC2 and ASCC3. Identified in the RQT (ribosome quality control trigger) complex, that contains ASCC2, ASCC3 and TRIP4. Interacts with NEK6. Interacts with CSRP1. Interacts with ZCCHC4. In terms of processing, phosphorylated by NEK6. Polyufmylated by the UFM1-conjugating system composed of the enzymes UBA5, UFC1 and UFL1. Deufmylated by the protease UFSP2. Ufmylation of TRIP4 is promoted by ligand-bound nuclear receptors that compete with UFSP2 for interaction with TRIP4. Nuclear receptors-induced ufmylation promotes the recruitment of additional transcriptional coactivators like EP300 and NCOA1 and therefore the assembly of a coactivator complex facilitating nuclear receptor-mediated transcription. In terms of tissue distribution, ubiquitously expressed. Expressed in the spinal cord, brain, paraspinal ganglia, thyroid, and submandibular glands. Expressed at low level in all the muscles (at protein level) but with higher expression in axial than in limb muscles.

It localises to the nucleus. Its subcellular location is the cytoplasm. The protein resides in the cytosol. It is found in the cytoskeleton. The protein localises to the microtubule organizing center. It localises to the centrosome. Its function is as follows. Transcription coactivator which associates with nuclear receptors, transcriptional coactivators including EP300, CREBBP and NCOA1, and basal transcription factors like TBP and TFIIA to facilitate nuclear receptors-mediated transcription. May thereby play an important role in establishing distinct coactivator complexes under different cellular conditions. Plays a role in thyroid hormone receptor and estrogen receptor transactivation. Also involved in androgen receptor transactivation. Plays a pivotal role in the transactivation of NF-kappa-B, SRF and AP1. Acts as a mediator of transrepression between nuclear receptor and either AP1 or NF-kappa-B. May play a role in the development of neuromuscular junction. May play a role in late myogenic differentiation. Also functions as part of the RQC trigger (RQT) complex that activates the ribosome quality control (RQC) pathway, a pathway that degrades nascent peptide chains during problematic translation. The chain is Activating signal cointegrator 1 from Mus musculus (Mouse).